The chain runs to 140 residues: ATP synthase epsilon chain (140 aa).

It belongs to the ATPase epsilon chain family. As to quaternary structure, F-type ATPases have 2 components, CF(1) - the catalytic core - and CF(0) - the membrane proton channel. CF(1) has five subunits: alpha(3), beta(3), gamma(1), delta(1), epsilon(1). CF(0) has three main subunits: a, b and c.

Its subcellular location is the cell inner membrane. Its function is as follows. Produces ATP from ADP in the presence of a proton gradient across the membrane. The chain is ATP synthase epsilon chain from Yersinia enterocolitica serotype O:8 / biotype 1B (strain NCTC 13174 / 8081).